A 159-amino-acid chain; its full sequence is Putative ribosomal RNA large subunit methyltransferase H (159 aa).

Residues leucine 76, glycine 108, and 127-132 (FSKMTF) contribute to the S-adenosyl-L-methionine site.

This sequence belongs to the RNA methyltransferase RlmH family.

The protein resides in the cytoplasm. It catalyses the reaction pseudouridine(1915) in 23S rRNA + S-adenosyl-L-methionine = N(3)-methylpseudouridine(1915) in 23S rRNA + S-adenosyl-L-homocysteine + H(+). Functionally, specifically methylates the pseudouridine at position 1915 (m3Psi1915) in 23S rRNA. The sequence is that of Putative ribosomal RNA large subunit methyltransferase H from Methanococcus maripaludis (strain C6 / ATCC BAA-1332).